We begin with the raw amino-acid sequence, 83 residues long: Cell division topological specificity factor (83 aa).

The protein belongs to the MinE family.

Functionally, prevents the cell division inhibition by proteins MinC and MinD at internal division sites while permitting inhibition at polar sites. This ensures cell division at the proper site by restricting the formation of a division septum at the midpoint of the long axis of the cell. The chain is Cell division topological specificity factor from Buchnera aphidicola subsp. Acyrthosiphon pisum (strain 5A).